A 134-amino-acid polypeptide reads, in one-letter code: Small ribosomal subunit protein eS24A (134 aa).

Serine 2 bears the N-acetylserine mark. The segment at 100-134 is disordered; it reads IQKVARQQRKQRKNRGKKVFGTGKRLAKRKSKQQD. Basic residues-rich tracts occupy residues 105 to 117 and 124 to 134; these read RQQRKQRKNRGKK and RLAKRKSKQQD.

This sequence belongs to the eukaryotic ribosomal protein eS24 family. In terms of assembly, component of the small ribosomal subunit (SSU). Mature yeast ribosomes consist of a small (40S) and a large (60S) subunit. The 40S small subunit contains 1 molecule of ribosomal RNA (18S rRNA) and at least 33 different proteins. The large 60S subunit contains 3 rRNA molecules (25S, 5.8S and 5S rRNA) and at least 46 different proteins.

The protein resides in the cytoplasm. In terms of biological role, component of the ribosome, a large ribonucleoprotein complex responsible for the synthesis of proteins in the cell. The small ribosomal subunit (SSU) binds messenger RNAs (mRNAs) and translates the encoded message by selecting cognate aminoacyl-transfer RNA (tRNA) molecules. The large subunit (LSU) contains the ribosomal catalytic site termed the peptidyl transferase center (PTC), which catalyzes the formation of peptide bonds, thereby polymerizing the amino acids delivered by tRNAs into a polypeptide chain. The nascent polypeptides leave the ribosome through a tunnel in the LSU and interact with protein factors that function in enzymatic processing, targeting, and the membrane insertion of nascent chains at the exit of the ribosomal tunnel. This chain is Small ribosomal subunit protein eS24A (rps2401), found in Schizosaccharomyces pombe (strain 972 / ATCC 24843) (Fission yeast).